We begin with the raw amino-acid sequence, 337 residues long: Large ribosomal subunit protein uL3 (337 aa).

Residues 1 to 29 (MPKINRPRRGSLAFSPRKRAQSPIPKYKS) are disordered.

It belongs to the universal ribosomal protein uL3 family. Part of the 50S ribosomal subunit. Forms a cluster with proteins L14 and L24e.

One of the primary rRNA binding proteins, it binds directly near the 3'-end of the 23S rRNA, where it nucleates assembly of the 50S subunit. The chain is Large ribosomal subunit protein uL3 from Methanoregula boonei (strain DSM 21154 / JCM 14090 / 6A8).